An 806-amino-acid polypeptide reads, in one-letter code: Transitional endoplasmic reticulum ATPase (806 aa).

An N-acetylalanine modification is found at Ala-2. 2 positions are modified to phosphoserine: Ser-3 and Ser-7. A Glycyl lysine isopeptide (Lys-Gly) (interchain with G-Cter in SUMO2) cross-link involves residue Lys-8. The residue at position 13 (Ser-13) is a Phosphoserine. A Glycyl lysine isopeptide (Lys-Gly) (interchain with G-Cter in SUMO2) cross-link involves residue Lys-18. Ser-37 bears the Phosphoserine mark. 247 to 253 is a binding site for ATP; it reads PGTGKTL. N6,N6,N6-trimethyllysine; by VCPKMT is present on Lys-315. ATP-binding residues include Asn-348 and His-384. The residue at position 436 (Thr-436) is a Phosphothreonine. Position 462 is a phosphoserine (Ser-462). 2 positions are modified to N6-acetyllysine: Lys-502 and Lys-505. 521-526 serves as a coordination point for ATP; that stretch reads GCGKTL. Lys-668 carries the N6-acetyllysine; alternate modification. Lys-668 is modified (N6-succinyllysine; alternate). Phosphoserine is present on Ser-702. Positions 708–727 are disordered; the sequence is RRERERQTNPSAMEVEEDDP. At Lys-754 the chain carries N6-acetyllysine. The tract at residues 768–806 is disordered; the sequence is FGSFRFPSGNQGGAGPSQGSGGGTGGSVYTEDNDDDLYG. A phosphoserine mark is found at Ser-770, Ser-775, and Ser-787. The segment covering 777 to 793 has biased composition (gly residues); that stretch reads NQGGAGPSQGSGGGTGG. The tract at residues 797–806 is interaction with UBXN6; sequence TEDNDDDLYG. Phosphotyrosine is present on Tyr-805.

It belongs to the AAA ATPase family. As to quaternary structure, homohexamer. Forms a ring-shaped particle of 12.5 nm diameter, that displays 6-fold radial symmetry. Part of a ternary complex containing STX5A, NSFL1C and VCP. NSFL1C forms a homotrimer that binds to one end of a VCP homohexamer. The complex binds to membranes enriched in phosphatidylethanolamine-containing lipids and promotes Golgi membrane fusion. Binds to a heterodimer of NPLOC4 and UFD1, binding to this heterodimer inhibits Golgi-membrane fusion. Interaction with VCIP135 leads to dissociation of the complex via ATP hydrolysis by VCP. Part of a ternary complex containing NPLOC4, UFD1 and VCP. Interacts with NSFL1C-like protein p37; the complex has membrane fusion activity and is required for Golgi and endoplasmic reticulum biogenesis. Interacts with SELENOS and SYVN1, as well as with DERL1 (via SHP-box motif), DERL2 and DERL3; which probably transfer misfolded proteins from the ER to VCP. Interacts with SVIP and DERL1. Component of a complex required to couple retrotranslocation, ubiquitination and deglycosylation composed of NGLY1, SAKS1, AMFR, VCP and RAD23B. Part of a complex composed of STUB1/CHIP, VCP/p97, CHRNA3, and UBXN2A that modulates the ubiquitination and endoplasmic reticulum-associated degradation (ERAD) of CHRNA3. Within the complex UBXN2A acts as a scaffold protein required for the interaction of CHRNA3 with VCP/p97, this interaction also inhibits CHRNA3 ubiquitination by STUB1/CHIP and subsequently ERAD. Interacts with UBXN2A (via UBX domain); the interaction is required for the interaction of CHRNA3 in the STUB1-VCP-UBXN2A complex. Directly interacts with UBXN4 and RNF19A. Interacts with CASR. Interacts with UBE4B and YOD1. Interacts with clathrin. Interacts with RNF103. Interacts with TRIM13 and TRIM21. Component of a VCP/p97-AMFR/gp78 complex that participates in the final step of the endoplasmic reticulum-associated degradation (ERAD) of HMGCR. Interacts directly with AMFR/gp78 (via its VIM). Interacts with RHBDD1 (via C-terminal domain). Interacts with SPRTN; leading to recruitment to stalled replication forks. Interacts with WASHC5. Interacts with UBOX5. Interacts (via N-terminus) with UBXN7, UBXN8, and probably several other UBX domain-containing proteins (via UBX domains); the interactions are mutually exclusive with VIM-dependent interactions such as those with AMFR and SELENOS. Forms a complex with UBQLN1 and UBXN4. Interacts (via the PIM motif) with RNF31 (via the PUB domain). Interacts with RIGI and RNF125; interaction takes place when RIGI is ubiquitinated via 'Lys-63'-linked ubiquitin on its CARD domains, leading to recruit RNF125 and promote ubiquitination and degradation of RIGI. Interacts with BAG6. Interacts with UBXN10. Interacts with UBXN6; the interaction with UBXN6 is direct and competitive with UFD1. Forms a ternary complex with CAV1 and UBXN6. Interacts with PLAA, UBXN6 and YOD1; may form a complex involved in macroautophagy. Interacts with ANKZF1. Interacts with ubiquitin-binding protein FAF1. Interacts with ZFAND2B (via VIM motif); the interaction is direct. Interacts with ZFAND1 (via its ubiquitin-like region); this interaction occurs in an arsenite-dependent manner. Interacts with CCDC47. Interacts with LMBR1L and UBAC2. Interacts with ATXN3. Interacts with TEX264; bridging VCP to covalent DNA-protein cross-links (DPCs). Mg(2+) is required as a cofactor. In terms of processing, ISGylated. Post-translationally, methylation at Lys-315 catalyzed by VCPKMT is increased in the presence of ASPSCR1. Lys-315 methylation may decrease ATPase activity. Phosphorylated by tyrosine kinases in response to T-cell antigen receptor activation. Phosphorylated in mitotic cells.

It is found in the cytoplasm. The protein localises to the cytosol. The protein resides in the endoplasmic reticulum. Its subcellular location is the nucleus. It localises to the stress granule. The enzyme catalyses ATP + H2O = ADP + phosphate + H(+). Necessary for the fragmentation of Golgi stacks during mitosis and for their reassembly after mitosis. Involved in the formation of the transitional endoplasmic reticulum (tER). The transfer of membranes from the endoplasmic reticulum to the Golgi apparatus occurs via 50-70 nm transition vesicles which derive from part-rough, part-smooth transitional elements of the endoplasmic reticulum (tER). Vesicle budding from the tER is an ATP-dependent process. The ternary complex containing UFD1, VCP and NPLOC4 binds ubiquitinated proteins and is necessary for the export of misfolded proteins from the ER to the cytoplasm, where they are degraded by the proteasome. The NPLOC4-UFD1-VCP complex regulates spindle disassembly at the end of mitosis and is necessary for the formation of a closed nuclear envelope. Regulates E3 ubiquitin-protein ligase activity of RNF19A. Component of the VCP/p97-AMFR/gp78 complex that participates in the final step of the sterol-mediated ubiquitination and endoplasmic reticulum-associated degradation (ERAD) of HMGCR. Mediates the endoplasmic reticulum-associated degradation of CHRNA3 in cortical neurons as part of the STUB1-VCP-UBXN2A complex. Involved in endoplasmic reticulum stress-induced pre-emptive quality control, a mechanism that selectively attenuates the translocation of newly synthesized proteins into the endoplasmic reticulum and reroutes them to the cytosol for proteasomal degradation. Involved in clearance process by mediating G3BP1 extraction from stress granules. Also involved in DNA damage response: recruited to double-strand breaks (DSBs) sites in a RNF8- and RNF168-dependent manner and promotes the recruitment of TP53BP1 at DNA damage sites. Recruited to stalled replication forks by SPRTN: may act by mediating extraction of DNA polymerase eta (POLH) to prevent excessive translesion DNA synthesis and limit the incidence of mutations induced by DNA damage. Together with SPRTN metalloprotease, involved in the repair of covalent DNA-protein cross-links (DPCs) during DNA synthesis. Involved in interstrand cross-link repair in response to replication stress by mediating unloading of the ubiquitinated CMG helicase complex. Mediates extraction of PARP1 trapped to chromatin: recognizes and binds ubiquitinated PARP1 and promotes its removal. Required for cytoplasmic retrotranslocation of stressed/damaged mitochondrial outer-membrane proteins and their subsequent proteasomal degradation. Essential for the maturation of ubiquitin-containing autophagosomes and the clearance of ubiquitinated protein by autophagy. Acts as a negative regulator of type I interferon production by interacting with RIGI: interaction takes place when RIGI is ubiquitinated via 'Lys-63'-linked ubiquitin on its CARD domains, leading to recruit RNF125 and promote ubiquitination and degradation of RIGI. May play a role in the ubiquitin-dependent sorting of membrane proteins to lysosomes where they undergo degradation. May more particularly play a role in caveolins sorting in cells. By controlling the steady-state expression of the IGF1R receptor, indirectly regulates the insulin-like growth factor receptor signaling pathway. The polypeptide is Transitional endoplasmic reticulum ATPase (VCP) (Sus scrofa (Pig)).